Consider the following 113-residue polypeptide: Large ribosomal subunit protein uL18 (113 aa).

This sequence belongs to the universal ribosomal protein uL18 family. As to quaternary structure, part of the 50S ribosomal subunit; part of the 5S rRNA/L5/L18/L25 subcomplex. Contacts the 5S and 23S rRNAs.

Functionally, this is one of the proteins that bind and probably mediate the attachment of the 5S RNA into the large ribosomal subunit, where it forms part of the central protuberance. In Phocaeicola vulgatus (strain ATCC 8482 / DSM 1447 / JCM 5826 / CCUG 4940 / NBRC 14291 / NCTC 11154) (Bacteroides vulgatus), this protein is Large ribosomal subunit protein uL18.